Reading from the N-terminus, the 179-residue chain is ATP-dependent protease subunit HslV (179 aa).

Residue threonine 8 is part of the active site. Serine 164, cysteine 167, and threonine 170 together coordinate Na(+).

Belongs to the peptidase T1B family. HslV subfamily. In terms of assembly, a double ring-shaped homohexamer of HslV is capped on each side by a ring-shaped HslU homohexamer. The assembly of the HslU/HslV complex is dependent on binding of ATP.

It localises to the cytoplasm. It carries out the reaction ATP-dependent cleavage of peptide bonds with broad specificity.. Its activity is regulated as follows. Allosterically activated by HslU binding. Its function is as follows. Protease subunit of a proteasome-like degradation complex believed to be a general protein degrading machinery. The protein is ATP-dependent protease subunit HslV of Staphylococcus carnosus (strain TM300).